The sequence spans 569 residues: Potassium-transporting ATPase potassium-binding subunit (569 aa).

Transmembrane regions (helical) follow at residues 3 to 23 (TEIL…YPLG), 64 to 84 (FLKS…ILLV), 133 to 153 (FVIM…MAGI), 179 to 199 (ILFP…TPMG), 255 to 275 (IVEC…LGFY), 281 to 301 (LGYV…FCNV), 375 to 395 (FGGV…AVFI), 421 to 441 (IVSL…SYVW), 497 to 517 (LALI…AGLL), and 535 to 555 (VTFG…SFFP).

The protein belongs to the KdpA family. In terms of assembly, the system is composed of three essential subunits: KdpA, KdpB and KdpC.

Its subcellular location is the cell inner membrane. Its function is as follows. Part of the high-affinity ATP-driven potassium transport (or Kdp) system, which catalyzes the hydrolysis of ATP coupled with the electrogenic transport of potassium into the cytoplasm. This subunit binds the periplasmic potassium ions and delivers the ions to the membrane domain of KdpB through an intramembrane tunnel. In Parabacteroides distasonis (strain ATCC 8503 / DSM 20701 / CIP 104284 / JCM 5825 / NCTC 11152), this protein is Potassium-transporting ATPase potassium-binding subunit.